A 133-amino-acid chain; its full sequence is Small ribosomal subunit protein uS8 (133 aa).

It belongs to the universal ribosomal protein uS8 family. Part of the 30S ribosomal subunit. Contacts proteins S5 and S12.

Its function is as follows. One of the primary rRNA binding proteins, it binds directly to 16S rRNA central domain where it helps coordinate assembly of the platform of the 30S subunit. The polypeptide is Small ribosomal subunit protein uS8 (Crocosphaera subtropica (strain ATCC 51142 / BH68) (Cyanothece sp. (strain ATCC 51142))).